Consider the following 215-residue polypeptide: Thymidylate kinase (215 aa).

ATP is bound at residue 11–18 (GIDGAGKS).

It belongs to the thymidylate kinase family.

It carries out the reaction dTMP + ATP = dTDP + ADP. Functionally, phosphorylation of dTMP to form dTDP in both de novo and salvage pathways of dTTP synthesis. This Nitrosomonas eutropha (strain DSM 101675 / C91 / Nm57) protein is Thymidylate kinase.